Here is a 562-residue protein sequence, read N- to C-terminus: DNA ligase (562 aa).

Glu252 is an ATP binding site. The active-site N6-AMP-lysine intermediate is Lys254. The ATP site is built by Arg259, Arg274, Glu303, Phe343, Arg419, and Lys425.

This sequence belongs to the ATP-dependent DNA ligase family. Mg(2+) serves as cofactor.

It carries out the reaction ATP + (deoxyribonucleotide)n-3'-hydroxyl + 5'-phospho-(deoxyribonucleotide)m = (deoxyribonucleotide)n+m + AMP + diphosphate.. DNA ligase that seals nicks in double-stranded DNA during DNA replication, DNA recombination and DNA repair. This chain is DNA ligase, found in Methanococcus aeolicus (strain ATCC BAA-1280 / DSM 17508 / OCM 812 / Nankai-3).